Consider the following 641-residue polypeptide: Soluble starch synthase 1, chloroplastic/amyloplastic (641 aa).

A chloroplast-targeting transit peptide spans 1 to 113 (MATAAGMGIG…DSIDKTIFVA (113 aa)). The interval 62–96 (TFLVPTSTPPAPTQSPAPAPTPPPLPDSGVGEIEP) is disordered. Pro residues predominate over residues 68-87 (STPPAPTQSPAPAPTPPPLP). Lys-147 serves as a coordination point for ADP-alpha-D-glucose.

This sequence belongs to the glycosyltransferase 1 family. Bacterial/plant glycogen synthase subfamily. Leaves and immature seeds.

The protein localises to the plastid. Its subcellular location is the chloroplast. It is found in the amyloplast. It catalyses the reaction [(1-&gt;4)-alpha-D-glucosyl](n) + ADP-alpha-D-glucose = [(1-&gt;4)-alpha-D-glucosyl](n+1) + ADP + H(+). The protein operates within glycan biosynthesis; starch biosynthesis. Its function is as follows. Involved in starch synthesis in endosperm amyloplasts. Plays a role in the elongation of amylopectin chains. Synthesizes preferentially amylopectin chains with a degree of polymerization (DP) of 7 to 11 by elongating chains with a DP of 4 to 7. Generates distincly chains with a DP of 8 to 12 chains from short chains with a DP of 6 to 7. In Oryza sativa subsp. japonica (Rice), this protein is Soluble starch synthase 1, chloroplastic/amyloplastic.